We begin with the raw amino-acid sequence, 65 residues long: Large ribosomal subunit protein bL35 (65 aa).

This sequence belongs to the bacterial ribosomal protein bL35 family.

In Porphyromonas gingivalis (strain ATCC 33277 / DSM 20709 / CIP 103683 / JCM 12257 / NCTC 11834 / 2561), this protein is Large ribosomal subunit protein bL35.